The chain runs to 50 residues: uncharacterized protein (50 aa).

The tract at residues 28 to 50 (SKLSPVTNGGKTIGKSNKVSKND) is disordered. Positions 29-50 (KLSPVTNGGKTIGKSNKVSKND) are enriched in polar residues.

This is an uncharacterized protein from Haemophilus influenzae (strain ATCC 51907 / DSM 11121 / KW20 / Rd).